Consider the following 504-residue polypeptide: MVTIRADEISNIIRERIEQYNREVTIVNTGTVLQVGDGIARIYGLDEVMAGELVEFEEGTIGIALNLESNNVGVVLMGDGLMIQEGSSVKATGKIAQIPVSEAYLGRVINALANPIDGRGKISASESRLIESPAPGIISRRSVYEPLQTGLIAIDSMIPIGRGQRELIIGDRQTGKTAVATDTILNQQGQNVICVYVAIGQKASSVAQVVTSLQERGAMEYTIVVAETADAPAALQYLAPYTGAALAEYFMYREQHTLIIYDDLSKQAQAYRQMSLLLRRPPGREAYPGDVFYLHSRLLERAAKLSSQLGEGSMTALPIVETQSGDVSAYIPTNVISITDGQIFLSADLFNAGIRPAINVGISVSRVGSAAQIKAMKQVAGKLKLELAQFAELEAFAQFSSDLDKATQNQLARGQRLRELLKQSQSAPLTVEEQVMTIYTGTNGYLDGLEIGQVRKFLVQLRTYLKTNKPQFQEIISSTKTLTPEAESVLKEGIQEQLERFLLQ.

Residue 170–177 coordinates ATP; it reads GDRQTGKT. Position 257 is a phosphothreonine (threonine 257).

This sequence belongs to the ATPase alpha/beta chains family. F-type ATPases have 2 components, CF(1) - the catalytic core - and CF(0) - the membrane proton channel. CF(1) has five subunits: alpha(3), beta(3), gamma(1), delta(1), epsilon(1). CF(0) has four main subunits: a, b, b' and c.

It localises to the plastid. The protein localises to the chloroplast thylakoid membrane. The catalysed reaction is ATP + H2O + 4 H(+)(in) = ADP + phosphate + 5 H(+)(out). Its function is as follows. Produces ATP from ADP in the presence of a proton gradient across the membrane. The alpha chain is a regulatory subunit. The protein is ATP synthase subunit alpha, chloroplastic of Nasturtium officinale (Watercress).